Here is a 381-residue protein sequence, read N- to C-terminus: Homoserine O-succinyltransferase (381 aa).

Residues 45-360 (NAVLVCHALN…PHGHDAFLLD (316 aa)) form the AB hydrolase-1 domain. The active-site Nucleophile is the Ser-151. Substrate is bound at residue Arg-221. Residues Asp-321 and His-354 contribute to the active site. Residue Asp-355 coordinates substrate.

Belongs to the AB hydrolase superfamily. MetX family. As to quaternary structure, homodimer.

It is found in the cytoplasm. It carries out the reaction L-homoserine + succinyl-CoA = O-succinyl-L-homoserine + CoA. Its pathway is amino-acid biosynthesis; L-methionine biosynthesis via de novo pathway; O-succinyl-L-homoserine from L-homoserine: step 1/1. Its function is as follows. Transfers a succinyl group from succinyl-CoA to L-homoserine, forming succinyl-L-homoserine. This chain is Homoserine O-succinyltransferase, found in Burkholderia multivorans (strain ATCC 17616 / 249).